Here is a 205-residue protein sequence, read N- to C-terminus: Tumor suppressor candidate gene 1 protein homolog (205 aa).

The segment covering 1–12 has biased composition (low complexity); it reads MWRMRGGATRRG. The interval 1–49 is disordered; the sequence is MWRMRGGATRRGSCGGEGGGSRGESGRLGRAREGGGGGGGVGWRGRAGG. The segment covering 13–23 has biased composition (gly residues); the sequence is SCGGEGGGSRG. A compositionally biased stretch (basic and acidic residues) spans 24-33; it reads ESGRLGRARE. Over residues 34–48 the composition is skewed to gly residues; it reads GGGGGGGVGWRGRAG. The stretch at 66–110 forms a coiled coil; the sequence is LEALRARDERDRQNARLREENARLRLENRRLRRENRSLFRQALRL. Disordered stretches follow at residues 113 to 149 and 174 to 205; these read DSGEREAAVETLAPDEPATNRKARGHGREEEPGSPRA and GARPPGAIEEPPLQETATGLCAHDPDVPRPWL. Phosphoserine is present on Ser146. Positions 196 to 205 are enriched in basic and acidic residues; the sequence is HDPDVPRPWL.

This Mus musculus (Mouse) protein is Tumor suppressor candidate gene 1 protein homolog (Tusc1).